The sequence spans 109 residues: Large ribosomal subunit protein uL24 (109 aa).

This sequence belongs to the universal ribosomal protein uL24 family. As to quaternary structure, part of the 50S ribosomal subunit.

Its function is as follows. One of two assembly initiator proteins, it binds directly to the 5'-end of the 23S rRNA, where it nucleates assembly of the 50S subunit. One of the proteins that surrounds the polypeptide exit tunnel on the outside of the subunit. The chain is Large ribosomal subunit protein uL24 from Hamiltonella defensa subsp. Acyrthosiphon pisum (strain 5AT).